A 796-amino-acid chain; its full sequence is Protein U58 (796 aa).

This sequence belongs to the herpesviridae UL87 family.

This Elephas maximus (Indian elephant) protein is Protein U58.